A 178-amino-acid polypeptide reads, in one-letter code: uncharacterized protein (178 aa).

4 helical membrane-spanning segments follow: residues 29–49, 76–96, 105–125, and 139–159; these read AATG…AYLF, VISI…YFLL, PGIL…NPIF, and IITT…SISF.

Its subcellular location is the cell membrane. This is an uncharacterized protein from Bacillus subtilis (strain 168).